Consider the following 121-residue polypeptide: NADH-quinone oxidoreductase subunit A (121 aa).

Helical transmembrane passes span Tyr8 to Gly28, Leu65 to Ile85, and Gln93 to Ile113.

Belongs to the complex I subunit 3 family. NDH-1 is composed of 14 different subunits. Subunits NuoA, H, J, K, L, M, N constitute the membrane sector of the complex.

The protein localises to the cell inner membrane. It catalyses the reaction a quinone + NADH + 5 H(+)(in) = a quinol + NAD(+) + 4 H(+)(out). NDH-1 shuttles electrons from NADH, via FMN and iron-sulfur (Fe-S) centers, to quinones in the respiratory chain. The immediate electron acceptor for the enzyme in this species is believed to be a menaquinone. Couples the redox reaction to proton translocation (for every two electrons transferred, four hydrogen ions are translocated across the cytoplasmic membrane), and thus conserves the redox energy in a proton gradient. In Flavobacterium psychrophilum (strain ATCC 49511 / DSM 21280 / CIP 103535 / JIP02/86), this protein is NADH-quinone oxidoreductase subunit A.